A 494-amino-acid polypeptide reads, in one-letter code: Ectonucleoside triphosphate diphosphohydrolase 8 (494 aa).

At 1 to 8 (MRLSWKER) the chain is on the cytoplasmic side. Residues 9-29 (VFMVLLGVAAASGLTMLILIL) traverse the membrane as a helical segment. At 30 to 465 (VKATNVLLPA…LTQWRAQSYS (436 aa)) the chain is on the extracellular side. An intrachain disulfide couples cysteine 78 to cysteine 102. Catalysis depends on glutamate 168, which acts as the Proton acceptor. A disulfide bond links cysteine 245 and cysteine 291. Residues asparagine 299 and asparagine 303 are each glycosylated (N-linked (GlcNAc...) asparagine). A disulfide bridge links cysteine 328 with cysteine 334. Asparagine 362 carries N-linked (GlcNAc...) asparagine glycosylation. Residues cysteine 380 and cysteine 402 are joined by a disulfide bond. Residues 466–486 (IWIAGVVFAVLTLVAILGAAA) form a helical membrane-spanning segment. The Cytoplasmic portion of the chain corresponds to 487-494 (VQLFWTQD).

Belongs to the GDA1/CD39 NTPase family. Ca(2+) is required as a cofactor. Requires Mg(2+) as cofactor. N-glycosylated. In terms of tissue distribution, present in liver, and at lower level in jejunum and kidney. Limited to the canalicular domain of hepatocytes (at protein level).

Its subcellular location is the cell membrane. The catalysed reaction is a ribonucleoside 5'-triphosphate + 2 H2O = a ribonucleoside 5'-phosphate + 2 phosphate + 2 H(+). In terms of biological role, canalicular ectonucleoside NTPDase responsible for the main hepatic NTPDase activity. Ectonucleoside NTPDases catalyze the hydrolysis of gamma- and beta-phosphate residues of nucleotides, playing a central role in concentration of extracellular nucleotides. Has activity toward ATP, ADP, UTP and UDP, but not toward AMP. The sequence is that of Ectonucleoside triphosphate diphosphohydrolase 8 (Entpd8) from Rattus norvegicus (Rat).